A 376-amino-acid polypeptide reads, in one-letter code: Small ribosomal subunit protein uS11m (376 aa).

It belongs to the universal ribosomal protein uS11 family. Component of the mitochondrial small ribosomal subunit (mt-SSU). Mature N.crassa 74S mitochondrial ribosomes consist of a small (37S) and a large (54S) subunit. The 37S small subunit contains a 16S ribosomal RNA (16S mt-rRNA) and 32 different proteins. The 54S large subunit contains a 23S rRNA (23S mt-rRNA) and 42 different proteins.

Its subcellular location is the mitochondrion. Its function is as follows. Component of the mitochondrial ribosome (mitoribosome), a dedicated translation machinery responsible for the synthesis of mitochondrial genome-encoded proteins, including at least some of the essential transmembrane subunits of the mitochondrial respiratory chain. The mitoribosomes are attached to the mitochondrial inner membrane and translation products are cotranslationally integrated into the membrane. This is Small ribosomal subunit protein uS11m (mrps18) from Neurospora crassa (strain ATCC 24698 / 74-OR23-1A / CBS 708.71 / DSM 1257 / FGSC 987).